The primary structure comprises 178 residues: Large ribosomal subunit protein uL6 (178 aa).

It belongs to the universal ribosomal protein uL6 family. Part of the 50S ribosomal subunit.

Functionally, this protein binds to the 23S rRNA, and is important in its secondary structure. It is located near the subunit interface in the base of the L7/L12 stalk, and near the tRNA binding site of the peptidyltransferase center. The sequence is that of Large ribosomal subunit protein uL6 from Streptococcus uberis (strain ATCC BAA-854 / 0140J).